A 350-amino-acid chain; its full sequence is Outer membrane porin PhoE (350 aa).

The signal sequence occupies residues 1–21 (MKKSTLALVVMGVVASASVHA).

The protein belongs to the Gram-negative porin family. In terms of assembly, homotrimer.

It localises to the cell outer membrane. Functionally, uptake of inorganic phosphate, phosphorylated compounds, and some other negatively charged solutes. This is Outer membrane porin PhoE (phoE) from Enterobacter cloacae.